A 288-amino-acid polypeptide reads, in one-letter code: 2-dehydro-3-deoxyphosphooctonate aldolase (288 aa).

The protein belongs to the KdsA family.

Its subcellular location is the cytoplasm. It catalyses the reaction D-arabinose 5-phosphate + phosphoenolpyruvate + H2O = 3-deoxy-alpha-D-manno-2-octulosonate-8-phosphate + phosphate. It participates in carbohydrate biosynthesis; 3-deoxy-D-manno-octulosonate biosynthesis; 3-deoxy-D-manno-octulosonate from D-ribulose 5-phosphate: step 2/3. Its pathway is bacterial outer membrane biogenesis; lipopolysaccharide biosynthesis. In Bdellovibrio bacteriovorus (strain ATCC 15356 / DSM 50701 / NCIMB 9529 / HD100), this protein is 2-dehydro-3-deoxyphosphooctonate aldolase.